The chain runs to 396 residues: Tryptophan synthase beta chain (396 aa).

The residue at position 86 (Lys-86) is an N6-(pyridoxal phosphate)lysine.

This sequence belongs to the TrpB family. In terms of assembly, tetramer of two alpha and two beta chains. Pyridoxal 5'-phosphate serves as cofactor.

The enzyme catalyses (1S,2R)-1-C-(indol-3-yl)glycerol 3-phosphate + L-serine = D-glyceraldehyde 3-phosphate + L-tryptophan + H2O. The protein operates within amino-acid biosynthesis; L-tryptophan biosynthesis; L-tryptophan from chorismate: step 5/5. In terms of biological role, the beta subunit is responsible for the synthesis of L-tryptophan from indole and L-serine. The sequence is that of Tryptophan synthase beta chain from Serratia proteamaculans (strain 568).